A 343-amino-acid polypeptide reads, in one-letter code: Protein RecA (343 aa).

66–73 (GPESSGKT) is an ATP binding site.

This sequence belongs to the RecA family.

The protein resides in the cytoplasm. In terms of biological role, can catalyze the hydrolysis of ATP in the presence of single-stranded DNA, the ATP-dependent uptake of single-stranded DNA by duplex DNA, and the ATP-dependent hybridization of homologous single-stranded DNAs. It interacts with LexA causing its activation and leading to its autocatalytic cleavage. This is Protein RecA from Nitrosomonas europaea (strain ATCC 19718 / CIP 103999 / KCTC 2705 / NBRC 14298).